Reading from the N-terminus, the 527-residue chain is Fusicoccadiene C-8 hydroxylase (527 aa).

The chain crosses the membrane as a helical span at residues 15 to 35 (GKPLLLFLILITLTYSLGIVF). N-linked (GlcNAc...) asparagine glycosylation occurs at Asn125. Residue Cys465 coordinates heme. The N-linked (GlcNAc...) asparagine glycan is linked to Asn496.

It belongs to the cytochrome P450 family. The cofactor is heme.

Its subcellular location is the membrane. It functions in the pathway mycotoxin biosynthesis. Its function is as follows. Cytochrome P450 monooxygenase; part of the gene cluster that mediates the biosynthesis of the diterpene glucoside brassicicene C. In the first step of the brassicicene C biosynthesis, the bifunctional diterpene synthase bsc8 that possesses both prenyl transferase and terpene cyclase activity, converts isopentenyl diphosphate and dimethylallyl diphosphate into geranylgeranyl diphosphate (GGDP) that is further converted into fusicocca-2,10(14)-diene, the first precursor for brassicicene C. Fusicocca-2,10(14)-diene is then substrate of cytochrome P450 monooxygenase bsc1 for hydroxylation at the C-8 position. Oxidation at C-16 position to aldehyde is then catalyzed by the cytochrome P450 monooyxygenase bsc7, yielding fusicocca-2,10(14)-diene-8-beta,16-diol. Follows the isomerization of the double bond and reduction of aldehyde to alcohol catalyzed by the short-chain dehydrogenase/reductase bsc3 to yield the diol compound fusicocca-1,10(14)-diene-8 beta,16-diol. The next step is the oxidation at the C-3 position of fusicocca-2,10(14)-diene-8-beta,16-diol catalyzed by the alpha-ketoglutarate dependent dioxygenase bsc9, to produce a triol compound. Methylation of the hydroxy group at position 16 is performed by the methyltransferase bsc6. 16-O-methylation is followed by oxidation at the C-13 position to ketone and an alkyl shift of the methyl group leads to brassicicene C. Although the probable acetyltransferase bsc4 is included in the gene cluster, no acetylation reactions are necessary for brassicicene C biosynthesis. However, the fact that brassicicene E, which is a structurally related compound having an acetoxy group at position 12, was previously isolated from another strain of A.brassicicola suggests that the ATCC 96836 strain might also produce a small amount of brassicicene E. This chain is Fusicoccadiene C-8 hydroxylase, found in Alternaria brassicicola (Dark leaf spot agent).